We begin with the raw amino-acid sequence, 581 residues long: Colicin-E2 (581 aa).

5 disordered regions span residues Met1–Gly74, Gln242–Asp269, Pro293–Glu320, Ala421–Lys488, and Asp513–Ile566. A compositionally biased stretch (gly residues) spans Ile20 to Asp35. Residues Gly36 to Pro45 show a composition bias toward low complexity. Residues Trp46–Gly74 show a composition bias toward gly residues. The span at Gln242–Asn251 shows a compositional bias: polar residues. 3 stretches are compositionally biased toward basic and acidic residues: residues Val296–Glu320, Gln429–Arg452, and Pro464–Lys475. Polar residues predominate over residues Phe518–Gln527. The span at Arg535 to Ile554 shows a compositional bias: basic and acidic residues. His549, His574, and His578 together coordinate Zn(2+).

Belongs to the colicin/pyosin nuclease family.

Functionally, this plasmid-coded bactericidal protein is an endonuclease active on both single- and double-stranded DNA but with undefined specificity. Its function is as follows. Colicins are polypeptide toxins produced by and active against E.coli and closely related bacteria. The chain is Colicin-E2 (col) from Escherichia coli.